A 238-amino-acid chain; its full sequence is Ribosomal RNA small subunit methyltransferase G (238 aa).

Residues Gly77, Phe82, 128–129 (AE), and Arg147 each bind S-adenosyl-L-methionine. The interval 219–238 (KETPNKYPRKPGTPNKLPIE) is disordered.

It belongs to the methyltransferase superfamily. RNA methyltransferase RsmG family.

The protein resides in the cytoplasm. In terms of biological role, specifically methylates the N7 position of guanine in position 535 of 16S rRNA. The protein is Ribosomal RNA small subunit methyltransferase G of Listeria monocytogenes serovar 1/2a (strain ATCC BAA-679 / EGD-e).